We begin with the raw amino-acid sequence, 120 residues long: Immunoglobulin kappa variable 2-112 (120 aa).

Positions 1-20 (MRCSLQFLGVLMFWISGVSG) are cleaved as a signal peptide. A framework-1 region spans residues 21 to 43 (DIVITQDELSNPVTSGESVSISC). C43 and C113 are oxidised to a cystine. Residues 44 to 59 (RSSKSLLYKDGKTYLN) are complementarity-determining-1. A framework-2 region spans residues 60-74 (WFLQRPGQSPQLLIY). Residues 75–81 (LMSTRAS) form a complementarity-determining-2 region. Positions 82-113 (GVSDRFSGSGSGTDFTLEISRVKAEDVGVYYC) are framework-3. The complementarity-determining-3 stretch occupies residues 114–120 (QQLVEYP).

The polypeptide is Immunoglobulin kappa variable 2-112 (Mus musculus (Mouse)).